Consider the following 479-residue polypeptide: Ribulose bisphosphate carboxylase large chain (479 aa).

A propeptide spanning residues 1-2 (MS) is cleaved from the precursor. 2 residues coordinate substrate: Asn-123 and Thr-173. Lys-175 serves as the catalytic Proton acceptor. Lys-177 provides a ligand contact to substrate. Positions 201, 203, and 204 each coordinate Mg(2+). Position 201 is an N6-carboxylysine (Lys-201). Position 208 is a phosphoserine (Ser-208). The active-site Proton acceptor is His-294. Substrate contacts are provided by Arg-295 and His-327. Thr-330 bears the Phosphothreonine mark. Substrate is bound at residue Ser-379.

This sequence belongs to the RuBisCO large chain family. Type I subfamily. As to quaternary structure, heterohexadecamer of 8 large chains and 8 small chains; disulfide-linked. The disulfide link is formed within the large subunit homodimers. Mg(2+) is required as a cofactor. In terms of processing, the disulfide bond which can form in the large chain dimeric partners within the hexadecamer appears to be associated with oxidative stress and protein turnover.

The protein resides in the plastid. Its subcellular location is the chloroplast. The enzyme catalyses 2 (2R)-3-phosphoglycerate + 2 H(+) = D-ribulose 1,5-bisphosphate + CO2 + H2O. It catalyses the reaction D-ribulose 1,5-bisphosphate + O2 = 2-phosphoglycolate + (2R)-3-phosphoglycerate + 2 H(+). Its function is as follows. RuBisCO catalyzes two reactions: the carboxylation of D-ribulose 1,5-bisphosphate, the primary event in carbon dioxide fixation, as well as the oxidative fragmentation of the pentose substrate in the photorespiration process. Both reactions occur simultaneously and in competition at the same active site. This chain is Ribulose bisphosphate carboxylase large chain, found in Capsella bursa-pastoris (Shepherd's purse).